Reading from the N-terminus, the 114-residue chain is U17-barytoxin-Tl1d (114 aa).

Positions 1 to 20 are cleaved as a signal peptide; it reads MKTIIVFLSLLVLATKFGDA. A propeptide spanning residues 21–74 is cleaved from the precursor; sequence NEGVNQEQMKEVIQNEFREDFLNEMAPMSLLQQLEAIESTLLEKEADRNSRQKR. 3 disulfides stabilise this stretch: Cys75–Cys88, Cys82–Cys93, and Cys87–Cys108.

It belongs to the neurotoxin 14 (magi-1) family. 03 (ICK-30-40) subfamily. Expressed by the venom gland.

It is found in the secreted. Ion channel inhibitor. In Trittame loki (Brush-footed trapdoor spider), this protein is U17-barytoxin-Tl1d.